A 178-amino-acid polypeptide reads, in one-letter code: MLDAFSRAAVSADSSGSFIGGGELASLKSFIADGNKRLDAVNAITSNASCIVSDAVAGICCENTGLTAPNGGVYTNRKMAACLRDGEIVLRYVSYALLAGDASVLQDRCLNGLRETYAALGVPTGSASRAVAIMKAAAGALITNTNSQPKKMPVTTGDCSNIAGEAASYFDMVISAIS.

2 residues coordinate phycourobilin: C50 and C61. (2R,3E)-phycoerythrobilin is bound by residues C82 and C159.

This sequence belongs to the phycobiliprotein family. Heterodimer of an alpha and a beta chain. Post-translationally, contains two covalently linked phycoerythrobilin chromophores and one covalently linked phycourobilin chromophore.

The protein resides in the cellular thylakoid membrane. Functionally, light-harvesting photosynthetic bile pigment-protein from the phycobiliprotein complex. This chain is C-phycoerythrin class 2 subunit beta (mpeB), found in Synechococcus sp. (strain WH8103).